We begin with the raw amino-acid sequence, 308 residues long: MGAQIRELRRRIKSAGAIKKITKAQELIATSRIAKAQARVVAARPYATEITNVLTALADDAALDHPLLVERPEPKRAGVLIVSSDRGLCGGYNANVLRVAEELYALLREQGKTPVVYVVGRKALNYYSFRNRKVTEAWTGFSERPEYASAQKIADTLVEAFLAGADDEGDDPGLDGILGVDELHIVYTEFKSMLTQAAVAKRIAPMEVEYVGEAAGPTTQYSFEPDATTLFGALLPRYLATRVYAALLEAAASESASRRRAMKAATDNADELIKGLTLEANGARQAQITQEISEIVGGVNALADAAGH.

It belongs to the ATPase gamma chain family. As to quaternary structure, F-type ATPases have 2 components, CF(1) - the catalytic core - and CF(0) - the membrane proton channel. CF(1) has five subunits: alpha(3), beta(3), gamma(1), delta(1), epsilon(1). CF(0) has three main subunits: a, b and c.

The protein resides in the cell membrane. Its function is as follows. Produces ATP from ADP in the presence of a proton gradient across the membrane. The gamma chain is believed to be important in regulating ATPase activity and the flow of protons through the CF(0) complex. The chain is ATP synthase gamma chain from Mycobacteroides abscessus (strain ATCC 19977 / DSM 44196 / CCUG 20993 / CIP 104536 / JCM 13569 / NCTC 13031 / TMC 1543 / L948) (Mycobacterium abscessus).